Consider the following 967-residue polypeptide: Muscular LMNA-interacting protein (967 aa).

A Phosphoserine modification is found at serine 129. 7 disordered regions span residues 132–154 (EDEA…IATR), 302–336 (GLAS…ASLT), 432–462 (QKVK…HQAS), 506–628 (GSTL…SASH), 644–685 (QTLQ…TPSL), 786–838 (SMHS…SQLT), and 929–967 (FSVR…DSKE). The required for interaction with ISL1 stretch occupies residues 144–811 (PPGGPGNIAT…GSETIKTPTT (668 aa)). Residues 437–455 (TPPTSKKSLSSGSLTTGST) show a composition bias toward low complexity. Residues 508 to 523 (TLRSNTTSPQPQTDTF) show a composition bias toward polar residues. Residues 528–541 (VPSVTPVLSPLSSS) are compositionally biased toward low complexity. A compositionally biased stretch (basic and acidic residues) spans 543-556 (GRKDGDSRTPEKNR). Polar residues-rich tracts occupy residues 558 to 567 (ICIQPSTLAS) and 658 to 685 (GSAT…TPSL). Position 792 is a phosphoserine (serine 792). Over residues 800-811 (MLGSETIKTPTT) the composition is skewed to polar residues. A compositionally biased stretch (low complexity) spans 826–835 (SSSSSTASES). Polar residues predominate over residues 938–947 (SPTLLSQDTY). A compositionally biased stretch (basic and acidic residues) spans 958 to 967 (PEHDTLDSKE).

As to quaternary structure, directly interacts with LMNA. Interacts with ISL1 (via N-terminal domain); the interaction represses ISL1 transactivator activity. Interactions of ISL1 with MLIP1 and GCN5/KAT2A may be mutually exclusive. Post-translationally, may be ubiquitinated by UBE3C ubiquitin ligase; ubiquitination is followed by protein degradation. As to expression, predominantly expressed in the heart and skeletal muscle, but detected at lower levels in the lung and brain (at protein level). Also detected in smooth muscle, thymus and kidney. In brain, expressed by a subpopulation of cells within the hippocampus and cortex. In heart, expressed by cardiomyocytes. Expression is reduced in hypertrophic hearts at the transcript level. However, expression in hypertrophic hearts induced by transverse aortic constriction do not differ from control at the protein level.

The protein localises to the nucleus. The protein resides in the nucleus envelope. It is found in the PML body. Its subcellular location is the cytoplasm. It localises to the cytosol. The protein localises to the cell membrane. The protein resides in the sarcolemma. In terms of biological role, required for myoblast differentiation into myotubes, possibly acting as a transcriptional regulator of the myogenic program. Required for cardiac adaptation to stress through integrated regulation of the AKT/mTOR pathways and FOXO1. Regulates cardiac homeostasis and plays a role in the protection against cardiac hypertrophy. Binds chromatin. May act as a transcriptional cofactor for ISL1, repressing its transcriptional activity. May also repress MYOCD transcriptional activity. The sequence is that of Muscular LMNA-interacting protein from Mus musculus (Mouse).